We begin with the raw amino-acid sequence, 129 residues long: HTH-type transcriptional regulator GlnR (129 aa).

An HTH merR-type domain is found at 10 to 78; it reads LFPIGIVMDL…MAGIKQVLLM (69 aa). A DNA-binding region (H-T-H motif) is located at residues 13–32; the sequence is IGIVMDLTQLSARQIRYYEE.

Homodimer under conditions of nitrogen excess. Monomer under conditions of nitrogen-limited. Interacts with feedback-inhibited GlnA in order to stabilizes GlnR-DNA complex.

With respect to regulation, under conditions of nitrogen excess, the DNA binding activity of GlnR is activated by a transient interaction with feedback-inhibited GlnA. Under conditions of nitrogen-limited, GlnR is autoinhibited by its C-terminal region. Transcription repressor during nitrogen excess. On the contrary of the MerR members, which require longer DNA sites for high-affinity binding, GlnR requires a DNA sequence of 17 nucleotides as minimal binding site. The chain is HTH-type transcriptional regulator GlnR from Bacillus anthracis.